A 495-amino-acid chain; its full sequence is MALSFGYLQRDNSFKKDSQECETPRIRKTPVNMYLEKTLSFKDLVDQRNNYRDGNCGVKTRKGINLKGPKPDNMILDRSLSFTSLVQVENRGGEEEDERGSSPKRRNRGNLTALSLPAPTPFWSPRPSTELDAAAVTLQKVYKSYRTRRNLADCAVVVEELWWKELELAKLEPNKTNDKPESAVSRWARAGTKAAKVGKGLLKDDKAQKLALRHWLEAIDPRHRYGHNLHLYYDVWSESESTQPFFFWLDIGDGKEVNLNKCSRTLLQRQCITYLGPKERQAYEVVVEDGKLVSRQTKSLVETTEGTKWIFVLSTTRKLYIGQKQKGRFQHSSFLSGAAITAAGRIVSHDGVVKAVWPYSGHYLPTEENFREFICFLRENHVNLTNVKMNAIDDDDHLVNNDGSTKPSMMVAKSDGSDEQKRFSCKWSTGNGPRIGCVRDYPMDLQTRALEQVNLSPRVVNGTMGLFGPIPSPRPSPKIRVSPRLSCMGLPSPRH.

The segment at 89–122 (ENRGGEEEDERGSSPKRRNRGNLTALSLPAPTPF) is disordered. An IQ domain is found at 131 to 160 (LDAAAVTLQKVYKSYRTRRNLADCAVVVEE).

Expressed in roots, rosette and cauline leaves, and at lower levels in stems, flowers and siliques.

Its subcellular location is the cytoplasm. The protein localises to the nucleus. Its function is as follows. May be involved in biotic and abiotic stress responses. In Arabidopsis thaliana (Mouse-ear cress), this protein is IQ domain-containing protein IQM5.